A 323-amino-acid polypeptide reads, in one-letter code: Polycomb complex protein BMI-1-B (323 aa).

An RING-type zinc finger spans residues 18–57 (CVLCGGYFIDAATIIECLHSFCKTCIVRYLETSKYCPICD). A Nuclear localization signal motif is present at residues 81 to 95 (KLVPGLFKGEMKRRR). Residues 238 to 310 (PHTDRINNTS…HQNPFANRAR (73 aa)) form a disordered region. Over residues 287–301 (HISSTINGTNSSSSH) the composition is skewed to low complexity.

Component of a PRC1-like complex. Interacts with cbx4.

The protein resides in the nucleus. Component of a Polycomb group (PcG) multiprotein PRC1-like complex, a complex class required to maintain the transcriptionally repressive state of many genes, including Hox genes, throughout development. PcG PRC1 complex acts via chromatin remodeling and modification of histones; it mediates monoubiquitination of histone H2A 'Lys-119', rendering chromatin heritably changed in its expressibility. In the PRC1 complex, it is required to stimulate the E3 ubiquitin-protein ligase activity of rnf2. The sequence is that of Polycomb complex protein BMI-1-B (bmi1b) from Xenopus laevis (African clawed frog).